The primary structure comprises 872 residues: Alanine--tRNA ligase (872 aa).

Zn(2+) contacts are provided by H567, H571, C669, and H673.

It belongs to the class-II aminoacyl-tRNA synthetase family. Zn(2+) is required as a cofactor.

Its subcellular location is the cytoplasm. The catalysed reaction is tRNA(Ala) + L-alanine + ATP = L-alanyl-tRNA(Ala) + AMP + diphosphate. In terms of biological role, catalyzes the attachment of alanine to tRNA(Ala) in a two-step reaction: alanine is first activated by ATP to form Ala-AMP and then transferred to the acceptor end of tRNA(Ala). Also edits incorrectly charged Ser-tRNA(Ala) and Gly-tRNA(Ala) via its editing domain. The chain is Alanine--tRNA ligase from Streptococcus thermophilus (strain CNRZ 1066).